A 302-amino-acid chain; its full sequence is Quinolinate synthase (302 aa).

Iminosuccinate-binding residues include His24 and Ser41. Residue Cys86 coordinates [4Fe-4S] cluster. Residues 112 to 114 (YVN) and Ser129 each bind iminosuccinate. A [4Fe-4S] cluster-binding site is contributed by Cys171. Residues 197–199 (HPE) and Thr214 each bind iminosuccinate. Residue Cys259 coordinates [4Fe-4S] cluster.

Belongs to the quinolinate synthase family. Type 2 subfamily. [4Fe-4S] cluster is required as a cofactor.

The protein localises to the cytoplasm. It catalyses the reaction iminosuccinate + dihydroxyacetone phosphate = quinolinate + phosphate + 2 H2O + H(+). The protein operates within cofactor biosynthesis; NAD(+) biosynthesis; quinolinate from iminoaspartate: step 1/1. Catalyzes the condensation of iminoaspartate with dihydroxyacetone phosphate to form quinolinate. The protein is Quinolinate synthase of Dehalococcoides mccartyi (strain CBDB1).